We begin with the raw amino-acid sequence, 368 residues long: POU domain, class 3, transcription factor 1 (368 aa).

Positions 1–16 (MATTAQYIPRNNSLPS) are enriched in polar residues. Disordered stretches follow at residues 1–28 (MATT…DRMH), 69–88 (TDWT…ASVQ), 100–134 (SHLV…NGHQ), and 147–193 (SPQP…PSSD). Basic and acidic residues predominate over residues 79 to 88 (QAEHNKASVQ). Polar residues predominate over residues 105 to 134 (QPTQNSHHGSWAPTTTHHLSPLSPASNGHQ). Basic and acidic residues predominate over residues 155–170 (GLRDPLHDDAGSHDNQ). In terms of domain architecture, POU-specific spans 187–261 (EDAPSSDDLE…LLNKWLEETD (75 aa)). The homeobox DNA-binding region spans 279-338 (KRKKRTSIEVGVKGALENHFLKCPKPSAHEITTLAGTLQLEKEVVRVWFCNRRQKEKRMT).

It belongs to the POU transcription factor family. Class-3 subfamily. Predominantly expressed in the embryonic and adult central nervous system.

The protein localises to the nucleus. In terms of biological role, transcription factor that may play important roles in patterning the embryonic brain. Could directly respond to the reception of the sonic hedgehog (shh) signal. In Danio rerio (Zebrafish), this protein is POU domain, class 3, transcription factor 1 (pou3f1).